The primary structure comprises 217 residues: Adenylate kinase (217 aa).

Position 10–15 (10–15 (GIGKGT)) interacts with ATP. The NMP stretch occupies residues 30 to 59 (ATGDIFRKNFQENTPLGKESKKFINKGLLV). Residues threonine 31, arginine 36, 57 to 59 (LLV), 85 to 88 (GFPR), and glutamine 92 contribute to the AMP site. The interval 126-163 (GRRICSHCGKVYHLDNLPPKIEGICDKDQKKLIQREDD) is LID. Residue arginine 127 coordinates ATP. The Zn(2+) site is built by cysteine 130 and cysteine 133. 136 to 137 (VY) is an ATP binding site. The Zn(2+) site is built by cysteine 150 and aspartate 153. Residues arginine 160 and arginine 171 each coordinate AMP. Glutamine 199 contacts ATP.

Belongs to the adenylate kinase family. In terms of assembly, monomer.

Its subcellular location is the cytoplasm. It catalyses the reaction AMP + ATP = 2 ADP. Its pathway is purine metabolism; AMP biosynthesis via salvage pathway; AMP from ADP: step 1/1. Functionally, catalyzes the reversible transfer of the terminal phosphate group between ATP and AMP. Plays an important role in cellular energy homeostasis and in adenine nucleotide metabolism. The sequence is that of Adenylate kinase from Phytoplasma australiense.